The chain runs to 307 residues: Transcription factor MYB78 (307 aa).

HTH myb-type domains follow at residues 23-79 (EMDV…RPDV) and 80-130 (RRGN…QKHA). 2 consecutive DNA-binding regions (H-T-H motif) follow at residues 51–75 (WNSL…LNYL) and 103–126 (WSKI…RTRV).

Its subcellular location is the nucleus. The polypeptide is Transcription factor MYB78 (Arabidopsis thaliana (Mouse-ear cress)).